A 518-amino-acid chain; its full sequence is Filamentous growth regulator 15 (518 aa).

Positions Met1–Asn41 are enriched in polar residues. 3 disordered regions span residues Met1–Arg63, Val75–Lys101, and Lys261–Arg307. The span at Gln42 to Gln52 shows a compositional bias: low complexity. Over residues Pro77 to Val95 the composition is skewed to polar residues. Residues Ser262 to Val274 are compositionally biased toward basic residues. A compositionally biased stretch (low complexity) spans Ser283–Asn298. The C2H2-type zinc-finger motif lies at His374–His406. Residues Arg492–Lys518 are disordered. Acidic residues predominate over residues Ser505–Lys518.

It is found in the nucleus. In terms of biological role, probable transcription factor involved in the regulation of filamentous growth. This chain is Filamentous growth regulator 15 (FGR15), found in Candida albicans (strain SC5314 / ATCC MYA-2876) (Yeast).